We begin with the raw amino-acid sequence, 341 residues long: Methionine import ATP-binding protein MetN 2 (341 aa).

The region spanning 2–241 is the ABC transporter domain; sequence IELKEVVKEY…PQHAVTKRFV (240 aa). Position 38–45 (38–45) interacts with ATP; that stretch reads GFSGAGKS.

The protein belongs to the ABC transporter superfamily. Methionine importer (TC 3.A.1.24) family. In terms of assembly, the complex is composed of two ATP-binding proteins (MetN), two transmembrane proteins (MetI) and a solute-binding protein (MetQ).

It is found in the cell membrane. The enzyme catalyses L-methionine(out) + ATP + H2O = L-methionine(in) + ADP + phosphate + H(+). It catalyses the reaction D-methionine(out) + ATP + H2O = D-methionine(in) + ADP + phosphate + H(+). Its function is as follows. Part of the ABC transporter complex MetNIQ involved in methionine import. Responsible for energy coupling to the transport system. In Staphylococcus aureus (strain MRSA252), this protein is Methionine import ATP-binding protein MetN 2.